We begin with the raw amino-acid sequence, 168 residues long: NADH dehydrogenase [ubiquinone] 1 alpha subcomplex assembly factor 2 (168 aa).

The segment at 112-168 is disordered; that stretch reads GKETSEELLPSPTATQVKGHASAPYFGREEPSVAPTSTGKTFQPGSWTPEDGKRQSQ. Serine 133 carries the post-translational modification Phosphoserine. Residues 145-157 are compositionally biased toward polar residues; that stretch reads APTSTGKTFQPGS.

Belongs to the complex I NDUFA12 subunit family. In terms of assembly, interacts with ARMC9.

Its subcellular location is the mitochondrion. Functionally, acts as a molecular chaperone for mitochondrial complex I assembly. Complex I functions in the transfer of electrons from NADH to the respiratory chain. The immediate electron acceptor for the enzyme is believed to be ubiquinone. Is involved in the initial steps of cilia formation, including removal of CP110 from the mother centrioles, docking of membrane vesicles to the mother centrioles, and establishment of the transition zone. This is NADH dehydrogenase [ubiquinone] 1 alpha subcomplex assembly factor 2 (Ndufaf2) from Mus musculus (Mouse).